Consider the following 234-residue polypeptide: Carboxy-S-adenosyl-L-methionine synthase (234 aa).

Residues Tyr35, 60–62, 83–84, and Arg191 contribute to the S-adenosyl-L-methionine site; these read GCS and DN.

The protein belongs to the class I-like SAM-binding methyltransferase superfamily. Cx-SAM synthase family. In terms of assembly, homodimer.

It carries out the reaction prephenate + S-adenosyl-L-methionine = carboxy-S-adenosyl-L-methionine + 3-phenylpyruvate + H2O. Catalyzes the conversion of S-adenosyl-L-methionine (SAM) to carboxy-S-adenosyl-L-methionine (Cx-SAM). This Campylobacter lari (strain RM2100 / D67 / ATCC BAA-1060) protein is Carboxy-S-adenosyl-L-methionine synthase.